The primary structure comprises 345 residues: AP2-like ethylene-responsive transcription factor At1g16060 (345 aa).

Residues 15-62 are disordered; that stretch reads TRQSKKTSVENETGDDQSATSVVLKAKRKRRSQPRDAPPQRSSVHRGV. DNA-binding regions (AP2/ERF) lie at residues 58 to 124 and 160 to 218; these read VHRG…LNFP and KYRG…TNFD. Residues 243–302 form a disordered region; that stretch reads HSDLSPFIKPNHESDLSQSQSSSEDNDDRKTKLLKSSPLVAEEVIGPSTPPEIAPPRRSF.

This sequence belongs to the AP2/ERF transcription factor family. AP2 subfamily.

It is found in the nucleus. Probably acts as a transcriptional activator. Binds to the GCC-box pathogenesis-related promoter element. May be involved in the regulation of gene expression by stress factors and by components of stress signal transduction pathways. The sequence is that of AP2-like ethylene-responsive transcription factor At1g16060 from Arabidopsis thaliana (Mouse-ear cress).